The chain runs to 275 residues: Phosphonoacetaldehyde hydrolase (275 aa).

Aspartate 15 functions as the Nucleophile in the catalytic mechanism. Mg(2+) contacts are provided by aspartate 15 and alanine 17. The active-site Schiff-base intermediate with substrate is the lysine 56. Aspartate 189 serves as a coordination point for Mg(2+).

Belongs to the HAD-like hydrolase superfamily. PhnX family. Homodimer. Mg(2+) is required as a cofactor.

It carries out the reaction phosphonoacetaldehyde + H2O = acetaldehyde + phosphate + H(+). Involved in phosphonate degradation. The sequence is that of Phosphonoacetaldehyde hydrolase from Pseudomonas putida (Arthrobacter siderocapsulatus).